The sequence spans 222 residues: Putative N-acetylmannosamine-6-phosphate 2-epimerase (222 aa).

The protein belongs to the NanE family.

It catalyses the reaction an N-acyl-D-glucosamine 6-phosphate = an N-acyl-D-mannosamine 6-phosphate. Its pathway is amino-sugar metabolism; N-acetylneuraminate degradation; D-fructose 6-phosphate from N-acetylneuraminate: step 3/5. Its function is as follows. Converts N-acetylmannosamine-6-phosphate (ManNAc-6-P) to N-acetylglucosamine-6-phosphate (GlcNAc-6-P). In Staphylococcus aureus (strain USA300), this protein is Putative N-acetylmannosamine-6-phosphate 2-epimerase.